The chain runs to 462 residues: Glycine--tRNA ligase (462 aa).

Residues Arg98 and Glu174 each coordinate substrate. ATP is bound by residues Arg206–Glu208, Phe216–Phe221, Glu290–Leu291, and Gly334–Arg337. A substrate-binding site is contributed by Phe221 to Glu225. Glu330 to Gly334 is a binding site for substrate.

This sequence belongs to the class-II aminoacyl-tRNA synthetase family. In terms of assembly, homodimer.

Its subcellular location is the cytoplasm. It carries out the reaction tRNA(Gly) + glycine + ATP = glycyl-tRNA(Gly) + AMP + diphosphate. Functionally, catalyzes the attachment of glycine to tRNA(Gly). The polypeptide is Glycine--tRNA ligase (Lachnoclostridium phytofermentans (strain ATCC 700394 / DSM 18823 / ISDg) (Clostridium phytofermentans)).